The primary structure comprises 287 residues: BURP domain-containing protein 2 (287 aa).

Positions 1–21 are cleaved as a signal peptide; it reads MARSLAALLLLLVAAAGASHA. A BURP domain is found at 67–287; sequence FFLEKDLFPG…PQDDMLWVRN (221 aa).

Expressed in shoot.

The chain is BURP domain-containing protein 2 (BURP2) from Oryza sativa subsp. japonica (Rice).